Reading from the N-terminus, the 124-residue chain is Large ribosomal subunit protein bL12 (124 aa).

It belongs to the bacterial ribosomal protein bL12 family. As to quaternary structure, homodimer. Part of the ribosomal stalk of the 50S ribosomal subunit. Forms a multimeric L10(L12)X complex, where L10 forms an elongated spine to which 2 to 4 L12 dimers bind in a sequential fashion. Binds GTP-bound translation factors.

Functionally, forms part of the ribosomal stalk which helps the ribosome interact with GTP-bound translation factors. Is thus essential for accurate translation. This chain is Large ribosomal subunit protein bL12, found in Vesicomyosocius okutanii subsp. Calyptogena okutanii (strain HA).